The primary structure comprises 1099 residues: Probable inorganic carbon transporter subunit DabA (1099 aa).

The interval 175 to 194 is disordered; the sequence is RQGRRRFATTERRTRRTRRS. Residues 176 to 194 show a composition bias toward basic residues; sequence QGRRRFATTERRTRRTRRS. The Zn(2+) site is built by Cys514, Asp516, His722, and Cys737. A disordered region spans residues 1071 to 1099; the sequence is AGAGAAQPTRDAIELPEQASGPLPARDGQ.

The protein belongs to the inorganic carbon transporter (TC 9.A.2) DabA family. As to quaternary structure, forms a complex with DabB. It depends on Zn(2+) as a cofactor.

The protein localises to the cell membrane. Functionally, part of an energy-coupled inorganic carbon pump. This chain is Probable inorganic carbon transporter subunit DabA, found in Parafrankia sp. (strain EAN1pec).